The following is a 250-amino-acid chain: tRNA-splicing endonuclease subunit Sen2-2 (250 aa).

Residues Y148, H156, and K189 contribute to the active site. Residues 225–250 form a disordered region; it reads SPELSREDQSTNSKQHVPNVSNLNTL. Over residues 234–250 the composition is skewed to polar residues; that stretch reads STNSKQHVPNVSNLNTL.

It belongs to the tRNA-intron endonuclease family. As to quaternary structure, tRNA splicing endonuclease is a heterotetramer composed of SEN2, SEN15, SEN34/LENG5 and SEN54.

The protein resides in the nucleus. The enzyme catalyses pretRNA = a 3'-half-tRNA molecule with a 5'-OH end + a 5'-half-tRNA molecule with a 2',3'-cyclic phosphate end + an intron with a 2',3'-cyclic phosphate and a 5'-hydroxyl terminus.. Constitutes one of the two catalytic subunit of the tRNA-splicing endonuclease complex, a complex responsible for identification and cleavage of the splice sites in pre-tRNA. It cleaves pre-tRNA at the 5'- and 3'-splice sites to release the intron. The products are an intron and two tRNA half-molecules bearing 2',3'-cyclic phosphate and 5'-OH termini. There are no conserved sequences at the splice sites, but the intron is invariably located at the same site in the gene, placing the splice sites an invariant distance from the constant structural features of the tRNA body. Probably carries the active site for 5'-splice site cleavage. This chain is tRNA-splicing endonuclease subunit Sen2-2 (SEN2), found in Arabidopsis thaliana (Mouse-ear cress).